Consider the following 265-residue polypeptide: 2-C-methyl-D-erythritol 4-phosphate cytidylyltransferase (265 aa).

Positions 231-241 (DRGGASREAER) are enriched in basic and acidic residues. The segment at 231–265 (DRGGASREAERSAMPSAATSVFSGARSAASGSEEV) is disordered. Over residues 253–265 (SGARSAASGSEEV) the composition is skewed to low complexity.

Belongs to the IspD/TarI cytidylyltransferase family. IspD subfamily.

It catalyses the reaction 2-C-methyl-D-erythritol 4-phosphate + CTP + H(+) = 4-CDP-2-C-methyl-D-erythritol + diphosphate. Its pathway is isoprenoid biosynthesis; isopentenyl diphosphate biosynthesis via DXP pathway; isopentenyl diphosphate from 1-deoxy-D-xylulose 5-phosphate: step 2/6. Catalyzes the formation of 4-diphosphocytidyl-2-C-methyl-D-erythritol from CTP and 2-C-methyl-D-erythritol 4-phosphate (MEP). The polypeptide is 2-C-methyl-D-erythritol 4-phosphate cytidylyltransferase (Xanthomonas campestris pv. campestris (strain 8004)).